Consider the following 98-residue polypeptide: Protein PROLINE CONTENT ALTERNATIVE 22 (98 aa).

In terms of tissue distribution, mainly expressed in flowers, to a lower extent, in roots and, at very low levels, in leaves and stems.

The protein localises to the cytoplasm. Acts as an opponent to RZF1 during early seedling growth in term of proline accumulation in response to dehydration and abscisic acid (ABA). Confers sensitivity to abiotic stresses such as ABA, drought and osmotic stress (e.g. mannitol treatment) by preventing proline accumulation and by reducing the expression of dehydration-inducible genes. Promotes the production of lipid peroxidation by drought stress thus leading to malondialdehyde (MDA) synthesis. Prevents pollen tube elongation. Necessary for RZF1 expression in seedlings. The polypeptide is Protein PROLINE CONTENT ALTERNATIVE 22 (Arabidopsis thaliana (Mouse-ear cress)).